A 227-amino-acid polypeptide reads, in one-letter code: Cytochrome c oxidase subunit 2 (227 aa).

Topologically, residues 1 to 14 are mitochondrial intermembrane; sequence MAYPFQLGLQDATS. The chain crosses the membrane as a helical span at residues 15–45; that stretch reads PIMEELLHFHDHTLMIVFLISSLVLYIITLM. At 46-59 the chain is on the mitochondrial matrix side; sequence LTTKLTHTSTMDAQ. The helical transmembrane segment at 60–87 threads the bilayer; it reads EVETVWTILPAIILVLIALPSLRILYMM. Residues 88-227 lie on the Mitochondrial intermembrane side of the membrane; the sequence is DEINNPSLTV…YFETWSALMV (140 aa). Cu cation-binding residues include H161, C196, E198, C200, H204, and M207. A Mg(2+)-binding site is contributed by E198. Y218 bears the Phosphotyrosine mark.

It belongs to the cytochrome c oxidase subunit 2 family. As to quaternary structure, component of the cytochrome c oxidase (complex IV, CIV), a multisubunit enzyme composed of 14 subunits. The complex is composed of a catalytic core of 3 subunits MT-CO1, MT-CO2 and MT-CO3, encoded in the mitochondrial DNA, and 11 supernumerary subunits COX4I, COX5A, COX5B, COX6A, COX6B, COX6C, COX7A, COX7B, COX7C, COX8 and NDUFA4, which are encoded in the nuclear genome. The complex exists as a monomer or a dimer and forms supercomplexes (SCs) in the inner mitochondrial membrane with NADH-ubiquinone oxidoreductase (complex I, CI) and ubiquinol-cytochrome c oxidoreductase (cytochrome b-c1 complex, complex III, CIII), resulting in different assemblies (supercomplex SCI(1)III(2)IV(1) and megacomplex MCI(2)III(2)IV(2)). Found in a complex with TMEM177, COA6, COX18, COX20, SCO1 and SCO2. Interacts with TMEM177 in a COX20-dependent manner. Interacts with COX20. Interacts with COX16. Cu cation serves as cofactor.

It is found in the mitochondrion inner membrane. It carries out the reaction 4 Fe(II)-[cytochrome c] + O2 + 8 H(+)(in) = 4 Fe(III)-[cytochrome c] + 2 H2O + 4 H(+)(out). Its function is as follows. Component of the cytochrome c oxidase, the last enzyme in the mitochondrial electron transport chain which drives oxidative phosphorylation. The respiratory chain contains 3 multisubunit complexes succinate dehydrogenase (complex II, CII), ubiquinol-cytochrome c oxidoreductase (cytochrome b-c1 complex, complex III, CIII) and cytochrome c oxidase (complex IV, CIV), that cooperate to transfer electrons derived from NADH and succinate to molecular oxygen, creating an electrochemical gradient over the inner membrane that drives transmembrane transport and the ATP synthase. Cytochrome c oxidase is the component of the respiratory chain that catalyzes the reduction of oxygen to water. Electrons originating from reduced cytochrome c in the intermembrane space (IMS) are transferred via the dinuclear copper A center (CU(A)) of subunit 2 and heme A of subunit 1 to the active site in subunit 1, a binuclear center (BNC) formed by heme A3 and copper B (CU(B)). The BNC reduces molecular oxygen to 2 water molecules using 4 electrons from cytochrome c in the IMS and 4 protons from the mitochondrial matrix. This chain is Cytochrome c oxidase subunit 2 (MT-CO2), found in Vulpes zerda (Fennec fox).